A 117-amino-acid polypeptide reads, in one-letter code: Large ribosomal subunit protein uL18 (117 aa).

Belongs to the universal ribosomal protein uL18 family. In terms of assembly, part of the 50S ribosomal subunit; part of the 5S rRNA/L5/L18/L25 subcomplex. Contacts the 5S and 23S rRNAs.

Functionally, this is one of the proteins that bind and probably mediate the attachment of the 5S RNA into the large ribosomal subunit, where it forms part of the central protuberance. The chain is Large ribosomal subunit protein uL18 from Acidithiobacillus ferrooxidans (strain ATCC 23270 / DSM 14882 / CIP 104768 / NCIMB 8455) (Ferrobacillus ferrooxidans (strain ATCC 23270)).